A 580-amino-acid polypeptide reads, in one-letter code: Tetratricopeptide repeat protein 39C (580 aa).

TPR repeat units lie at residues 312–345 (SLFMFFKGRIQRLECQINSALTSFHTALELAVDQ), 350–383 (HVCLYEIGWCSMIELNFKDAFDSFERLKNESRWS), and 482–515 (GLKHLLLGAIHKCLGNSQDALQFFQRAARDELCR).

The protein belongs to the TTC39 family.

The polypeptide is Tetratricopeptide repeat protein 39C (Ttc39c) (Mus musculus (Mouse)).